Here is a 340-residue protein sequence, read N- to C-terminus: Cytochrome c peroxidase, mitochondrial (340 aa).

The N-terminal 17 residues, 1–17 (MRSFRAVRNFSTTAKRL), are a transit peptide targeting the mitochondrion. The Proton acceptor role is filled by His101. Residues 175-198 (WKRGRVDEPESASPPDGSLPDASQ) are disordered. His224 is a heme b binding site. The active-site Tryptophan radical intermediate is Trp240.

Belongs to the peroxidase family. Cytochrome c peroxidase subfamily. As to quaternary structure, forms a one-to-one complex with cytochrome c. It depends on heme b as a cofactor.

Its subcellular location is the mitochondrion matrix. The protein resides in the mitochondrion intermembrane space. The enzyme catalyses 2 Fe(II)-[cytochrome c] + H2O2 + 2 H(+) = 2 Fe(III)-[cytochrome c] + 2 H2O. Destroys radicals which are normally produced within the cells and which are toxic to biological systems. This is Cytochrome c peroxidase, mitochondrial (CCP1) from Yarrowia lipolytica (strain CLIB 122 / E 150) (Yeast).